The following is a 438-amino-acid chain: 26S proteasome regulatory subunit 6A (438 aa).

Residues 1-24 are disordered; it reads MSTLEELDALDQSQQGGSSNNEGL. Polar residues predominate over residues 11–22; sequence DQSQQGGSSNNE. 226-233 lines the ATP pocket; that stretch reads GPPGTGKT.

The protein belongs to the AAA ATPase family.

The protein localises to the cytoplasm. It is found in the nucleus. In terms of biological role, the 26S proteasome is involved in the ATP-dependent degradation of ubiquitinated proteins. The regulatory (or ATPase) complex confers ATP dependency and substrate specificity to the 26S complex. This Schizosaccharomyces pombe (strain 972 / ATCC 24843) (Fission yeast) protein is 26S proteasome regulatory subunit 6A (tbp1).